The primary structure comprises 225 residues: Protein-L-isoaspartate O-methyltransferase (225 aa).

S-adenosyl-L-homocysteine is bound by residues 57–60 (ATVS), His65, Ser89, 110–111 (EH), 142–143 (DG), Thr216, and Gln221. The active site involves Ser60.

The protein belongs to the methyltransferase superfamily. L-isoaspartyl/D-aspartyl protein methyltransferase family. In terms of assembly, monomer.

Its subcellular location is the cytoplasm. The protein localises to the cytosol. The enzyme catalyses [protein]-L-isoaspartate + S-adenosyl-L-methionine = [protein]-L-isoaspartate alpha-methyl ester + S-adenosyl-L-homocysteine. Initiates the repair of damaged proteins by catalyzing methyl esterification of L-isoaspartyl and D-aspartyl residues produced by spontaneous isomerization and racemization of L-aspartyl and L-asparaginyl residues in aging peptides and proteins. In Caenorhabditis elegans, this protein is Protein-L-isoaspartate O-methyltransferase (pcm-1).